The sequence spans 114 residues: T cell receptor beta variable 5-6 (114 aa).

The signal sequence occupies residues 1 to 21 (MGPGLLCWALLCLLGAGLVDA). One can recognise an Ig-like domain in the interval 22–114 (GVTQSPTHLI…SALYLCASSL (93 aa)). Cys42 and Cys110 are joined by a disulfide. N-linked (GlcNAc...) asparagine glycosylation occurs at Asn90.

Alpha-beta TR is a heterodimer composed of an alpha and beta chain; disulfide-linked. The alpha-beta TR is associated with the transmembrane signaling CD3 coreceptor proteins to form the TR-CD3 (TcR or TCR). The assembly of alpha-beta TR heterodimers with CD3 occurs in the endoplasmic reticulum where a single alpha-beta TR heterodimer associates with one CD3D-CD3E heterodimer, one CD3G-CD3E heterodimer and one CD247 homodimer forming a stable octameric structure. CD3D-CD3E and CD3G-CD3E heterodimers preferentially associate with TR alpha and TR beta chains, respectively. The association of the CD247 homodimer is the last step of TcR assembly in the endoplasmic reticulum and is required for transport to the cell surface.

Its subcellular location is the cell membrane. Its function is as follows. V region of the variable domain of T cell receptor (TR) beta chain that participates in the antigen recognition. Alpha-beta T cell receptors are antigen specific receptors which are essential to the immune response and are present on the cell surface of T lymphocytes. Recognize peptide-major histocompatibility (MH) (pMH) complexes that are displayed by antigen presenting cells (APC), a prerequisite for efficient T cell adaptive immunity against pathogens. Binding of alpha-beta TR to pMH complex initiates TR-CD3 clustering on the cell surface and intracellular activation of LCK that phosphorylates the ITAM motifs of CD3G, CD3D, CD3E and CD247 enabling the recruitment of ZAP70. In turn ZAP70 phosphorylates LAT, which recruits numerous signaling molecules to form the LAT signalosome. The LAT signalosome propagates signal branching to three major signaling pathways, the calcium, the mitogen-activated protein kinase (MAPK) kinase and the nuclear factor NF-kappa-B (NF-kB) pathways, leading to the mobilization of transcription factors that are critical for gene expression and essential for T cell growth and differentiation. The T cell repertoire is generated in the thymus, by V-(D)-J rearrangement. This repertoire is then shaped by intrathymic selection events to generate a peripheral T cell pool of self-MH restricted, non-autoaggressive T cells. Post-thymic interaction of alpha-beta TR with the pMH complexes shapes TR structural and functional avidity. This is T cell receptor beta variable 5-6 from Homo sapiens (Human).